A 56-amino-acid polypeptide reads, in one-letter code: UPF0391 membrane protein Rru_A0119 (56 aa).

2 helical membrane-spanning segments follow: residues 4-24 and 30-50; these read WALI…GGIA and IAQI…IMHF.

It belongs to the UPF0391 family.

The protein localises to the cell membrane. This chain is UPF0391 membrane protein Rru_A0119, found in Rhodospirillum rubrum (strain ATCC 11170 / ATH 1.1.1 / DSM 467 / LMG 4362 / NCIMB 8255 / S1).